Here is a 151-residue protein sequence, read N- to C-terminus: Deoxyuridine 5'-triphosphate nucleotidohydrolase (151 aa).

Substrate contacts are provided by residues 70–72, Asn-83, 87–89, and Met-97; these read RSG and LID.

Belongs to the dUTPase family. Mg(2+) is required as a cofactor.

The catalysed reaction is dUTP + H2O = dUMP + diphosphate + H(+). The protein operates within pyrimidine metabolism; dUMP biosynthesis; dUMP from dCTP (dUTP route): step 2/2. Its function is as follows. This enzyme is involved in nucleotide metabolism: it produces dUMP, the immediate precursor of thymidine nucleotides and it decreases the intracellular concentration of dUTP so that uracil cannot be incorporated into DNA. This Tolumonas auensis (strain DSM 9187 / NBRC 110442 / TA 4) protein is Deoxyuridine 5'-triphosphate nucleotidohydrolase.